Consider the following 335-residue polypeptide: Mitochondrial amidoxime reducing component 2 (335 aa).

Residues 1 to 35 (MGASSSSALARLGLPARPWPRWLGVAALGLAAVAL) constitute a mitochondrion transit peptide. Glycyl lysine isopeptide (Lys-Gly) (interchain with G-Cter in ubiquitin) cross-links involve residues lysine 59, lysine 138, and lysine 144. At lysine 156 the chain carries N6-acetyllysine; alternate. A Glycyl lysine isopeptide (Lys-Gly) (interchain with G-Cter in ubiquitin); alternate cross-link involves residue lysine 156. Residues lysine 166, lysine 173, lysine 187, lysine 287, and lysine 294 each participate in a glycyl lysine isopeptide (Lys-Gly) (interchain with G-Cter in ubiquitin) cross-link. The region spanning 188-334 (GRTSRKLLPT…LRVGDPVYRM (147 aa)) is the MOSC domain.

As to quaternary structure, component of a complex composed of cytochrome b5, NADH-cytochrome b5 reductase (CYB5R3) and MTARC2. Mo-molybdopterin serves as cofactor. Ubiquitinated by PRKN during mitophagy, leading to its degradation and enhancement of mitophagy. Deubiquitinated by USP30.

The protein resides in the mitochondrion outer membrane. It localises to the peroxisome. It catalyses the reaction N(omega)-hydroxy-L-arginine + 2 Fe(II)-[cytochrome b5] + 2 H(+) = L-arginine + 2 Fe(III)-[cytochrome b5] + H2O. Functionally, catalyzes the reduction of N-oxygenated molecules, acting as a counterpart of cytochrome P450 and flavin-containing monooxygenases in metabolic cycles. As a component of prodrug-converting system, reduces a multitude of N-hydroxylated prodrugs particularly amidoximes, leading to increased drug bioavailability. May be involved in mitochondrial N(omega)-hydroxy-L-arginine (NOHA) reduction, regulating endogenous nitric oxide levels and biosynthesis. Postulated to cleave the N-OH bond of N-hydroxylated substrates in concert with electron transfer from NADH to cytochrome b5 reductase then to cytochrome b5, the ultimate electron donor that primes the active site for substrate reduction. This chain is Mitochondrial amidoxime reducing component 2, found in Homo sapiens (Human).